A 968-amino-acid chain; its full sequence is RNA polymerase-associated protein RapA (968 aa).

One can recognise a Helicase ATP-binding domain in the interval 164 to 334 (DVGRRHAPRV…FARLRLLDPN (171 aa)). 177–184 (DEVGLGKT) contacts ATP. Residues 280–283 (DEAH) carry the DEAH box motif. The Helicase C-terminal domain occupies 490–644 (RVEWLMGYLT…TCPTGRTVYD (155 aa)).

This sequence belongs to the SNF2/RAD54 helicase family. RapA subfamily. As to quaternary structure, interacts with the RNAP. Has a higher affinity for the core RNAP than for the holoenzyme. Its ATPase activity is stimulated by binding to RNAP.

Its function is as follows. Transcription regulator that activates transcription by stimulating RNA polymerase (RNAP) recycling in case of stress conditions such as supercoiled DNA or high salt concentrations. Probably acts by releasing the RNAP, when it is trapped or immobilized on tightly supercoiled DNA. Does not activate transcription on linear DNA. Probably not involved in DNA repair. The sequence is that of RNA polymerase-associated protein RapA from Klebsiella pneumoniae (strain 342).